Here is a 623-residue protein sequence, read N- to C-terminus: Chaperone protein DnaK (623 aa).

T197 carries the phosphothreonine; by autocatalysis modification. Residues 595–615 are compositionally biased toward basic and acidic residues; the sequence is AENMYKKDEPNTANDKKKKDD. A disordered region spans residues 595-623; the sequence is AENMYKKDEPNTANDKKKKDDDVIDAEVE.

The protein belongs to the heat shock protein 70 family.

Its function is as follows. Acts as a chaperone. The polypeptide is Chaperone protein DnaK (Campylobacter jejuni subsp. doylei (strain ATCC BAA-1458 / RM4099 / 269.97)).